The primary structure comprises 654 residues: Hepatocyte growth factor activator serine proteases (654 aa).

An N-terminal signal peptide occupies residues 1-33; that stretch reads MGRWAWGPSLCPLPGMALLLLLLLLLVPHGAQP. Residues 34–100 form a disordered region; the sequence is QAGGNLTEPP…SSSPGDPVLT (67 aa). Residues 34-370 constitute a propeptide, removed in mature form; it reads QAGGNLTEPP…RLAACESLAR (337 aa). Residues Asn-38 and Asn-46 are each glycosylated (N-linked (GlcNAc...) asparagine). Low complexity predominate over residues 57-81; it reads PVTSVTPVTPATSAPEAQGPRGRGL. Residues 101 to 148 form the Fibronectin type-II domain; it reads VDGQPCRFPFRYGGRMLHACTSEGSAHRKWCATTHNYDRDRAWGYCVQ. Intrachain disulfides connect Cys-106-Cys-131, Cys-120-Cys-146, Cys-162-Cys-173, Cys-167-Cys-184, Cys-186-Cys-195, Cys-200-Cys-228, Cys-226-Cys-235, Cys-243-Cys-254, Cys-248-Cys-265, Cys-267-Cys-276, Cys-284-Cys-365, Cys-305-Cys-347, Cys-336-Cys-360, Cys-393-Cys-520, Cys-431-Cys-447, Cys-439-Cys-509, Cys-534-Cys-603, Cys-566-Cys-582, and Cys-593-Cys-621. The region spanning 158–196 is the EGF-like 1 domain; it reads ALDSCASSPCLNGGSCSHTQDPGSYHCTCPMAFTGRNCD. The Fibronectin type-I domain maps to 198–238; the sequence is EKCFDETRYEHLEAGDRWARVSQGQVEQCECAGGQIRCEGT. Residues 239 to 277 enclose the EGF-like 2 domain; it reads RHTACLSSPCLNGGTCHLIVATGTTVCSCPPGHAGRLCN. The Kringle domain maps to 283–365; that stretch reads RCFVGNGTEY…SWEYCRLAAC (83 aa). An N-linked (GlcNAc...) asparagine glycan is attached at Asn-288. The Peptidase S1 domain occupies 407 to 645; the sequence is IIGGSSSLPG…YVDWIKDRIW (239 aa). The active-site Charge relay system is His-446. 2 N-linked (GlcNAc...) asparagine glycosylation sites follow: Asn-467 and Asn-491. Asp-496 serves as the catalytic Charge relay system. Residue Asn-545 is glycosylated (N-linked (GlcNAc...) asparagine). Residue Ser-597 is the Charge relay system of the active site.

This sequence belongs to the peptidase S1 family. Heterodimer of a short chain and a long chain linked by a disulfide bond. In terms of processing, the active form of HGFAC presents in the serum is derived from the COOH-terminal region of the precursor by the cleavage of bonds between Arg-370 and Ile-371 and Arg-406 and Ile-407. As to expression, liver.

It localises to the secreted. Its function is as follows. Serine protease that hydrolyzes the inactive zymogen hepatocyte growth factor (HGFsc) to an activated disulfide-linked heterodimer, then initiating hepatocyte growth factor receptor signaling pathway. The protein is Hepatocyte growth factor activator serine proteases (HGFAC) of Canis lupus familiaris (Dog).